The sequence spans 253 residues: 5'-nucleotidase SurE (253 aa).

Positions 8, 9, 39, and 92 each coordinate a divalent metal cation.

It belongs to the SurE nucleotidase family. It depends on a divalent metal cation as a cofactor.

It localises to the cytoplasm. It catalyses the reaction a ribonucleoside 5'-phosphate + H2O = a ribonucleoside + phosphate. In terms of biological role, nucleotidase that shows phosphatase activity on nucleoside 5'-monophosphates. This is 5'-nucleotidase SurE from Burkholderia mallei (strain NCTC 10247).